Consider the following 935-residue polypeptide: UvrABC system protein A (935 aa).

Residue 31–38 (GLSGSGKS) participates in ATP binding. The C4-type zinc-finger motif lies at 254-281 (CFKCKMSFEELEPLSFSFNSPKGACESC). ABC transporter domains lie at 310–579 (IFGY…NNHS) and 599–931 (KEKH…KFLA). An ATP-binding site is contributed by 631–638 (GVSGSGKS). The C4-type zinc finger occupies 731–757 (CEKCQGDGDIKIEMHFLPDVLVQCDSC).

This sequence belongs to the ABC transporter superfamily. UvrA family. In terms of assembly, forms a heterotetramer with UvrB during the search for lesions.

Its subcellular location is the cytoplasm. In terms of biological role, the UvrABC repair system catalyzes the recognition and processing of DNA lesions. UvrA is an ATPase and a DNA-binding protein. A damage recognition complex composed of 2 UvrA and 2 UvrB subunits scans DNA for abnormalities. When the presence of a lesion has been verified by UvrB, the UvrA molecules dissociate. The sequence is that of UvrABC system protein A from Helicobacter pylori (strain ATCC 700392 / 26695) (Campylobacter pylori).